Reading from the N-terminus, the 496-residue chain is Probable cytosol aminopeptidase (496 aa).

2 residues coordinate Mn(2+): lysine 266 and aspartate 271. Lysine 278 is a catalytic residue. Residues aspartate 289, aspartate 348, and glutamate 350 each contribute to the Mn(2+) site. The active site involves arginine 352.

The protein belongs to the peptidase M17 family. Mn(2+) serves as cofactor.

It is found in the cytoplasm. The catalysed reaction is Release of an N-terminal amino acid, Xaa-|-Yaa-, in which Xaa is preferably Leu, but may be other amino acids including Pro although not Arg or Lys, and Yaa may be Pro. Amino acid amides and methyl esters are also readily hydrolyzed, but rates on arylamides are exceedingly low.. It carries out the reaction Release of an N-terminal amino acid, preferentially leucine, but not glutamic or aspartic acids.. In terms of biological role, presumably involved in the processing and regular turnover of intracellular proteins. Catalyzes the removal of unsubstituted N-terminal amino acids from various peptides. The sequence is that of Probable cytosol aminopeptidase from Pseudomonas fluorescens (strain SBW25).